The chain runs to 400 residues: N(alpha)-acyl-glutamine aminoacylase (400 aa).

This sequence belongs to the peptidase M20 family. It depends on Zn(2+) as a cofactor.

The catalysed reaction is an N(2)-acyl-L-glutamine + H2O = a carboxylate + L-glutamine. The enzyme catalyses N(2)-[(2E)-3-methylhex-2-enoyl]-L-glutaminate + H2O = (2E)-3-methylhex-2-enoate + L-glutamine. It carries out the reaction N(2)-(3-hydroxy-3-methylhexanoyl)-L-glutaminate + H2O = 3-hydroxy-3-methylhexanoate + L-glutamine. With respect to regulation, partial loss of activity with the combination Mn(2+) and chelating agents. Activity is lost in presence of 0.5 mM dithiothreitol. Functionally, hydrolyzes odorless N-alpha-acyl-L-glutamine conjugates of short- and medium-chain fatty acids, releasing human axillary malodor compounds. The enzyme is highly specific for the glutamine residue but has a low specificity for the acyl part of the substrate. The two most common products are 3-methyl-2-hexenoic acid (3M2H) and 3-hydroxy-3-methyl-hexanoic acid (HMHA), which are produced from the odorless precursors N-alpha-3-methyl-2-hexenoyl-L-glutamine (3M2H-Gln) and N-alpha-3-hydroxy-3-methylhexanoyl-L-glutamine (HMHA-Gln). In addition, over 28 different carboxylic acids contributing to human body odor are released by this enzyme from odorless axilla secretions, including several aliphatic 3-hydroxy acids with 4-Me branches, 3,4-unsaturated, 4-Et-branched aliphatic acids, and a variety of degradation products of amino acids. This is N(alpha)-acyl-glutamine aminoacylase from Corynebacterium striatum.